The following is a 462-amino-acid chain: NAD-capped RNA hydrolase NUDT12 (462 aa).

ANK repeat units follow at residues 11–40 (EIVT…SLLN), 45–74 (NGWT…DRSI), and 78–98 (SRQT…ANLL). Lys-185 is modified (N6-succinyllysine). Cys-284 and Cys-287 together coordinate Zn(2+). Residue Lys-292 is modified to N6-succinyllysine. Residues Cys-302 and Cys-307 each contribute to the Zn(2+) site. Residues Tyr-318, 354–356 (AGF), Glu-370, Glu-374, and Glu-415 contribute to the substrate site. A Nudix hydrolase domain is found at 319-453 (PRVDPVVIMQ…SRAIAHQLIK (135 aa)). Mg(2+) is bound by residues Ala-354, Glu-370, Glu-374, and Glu-415. The short motif at 355–376 (GFIEPGETIEDAVRREVEEESG) is the Nudix box element. The Microbody targeting signal signature appears at 460–462 (PNL).

It belongs to the Nudix hydrolase family. NudC subfamily. As to quaternary structure, homodimer. Homodimerization is essential for its catalytic activity and protein stability. Interacts (via ANK repeats) with BLMH. Mg(2+) is required as a cofactor. It depends on Zn(2+) as a cofactor.

The protein localises to the cytoplasm. It is found in the peroxisome. It localises to the cytoplasmic granule. It carries out the reaction a 5'-end NAD(+)-phospho-ribonucleoside in mRNA + H2O = a 5'-end phospho-adenosine-phospho-ribonucleoside in mRNA + beta-nicotinamide D-ribonucleotide + 2 H(+). The catalysed reaction is NAD(+) + H2O = beta-nicotinamide D-ribonucleotide + AMP + 2 H(+). The enzyme catalyses NADH + H2O = reduced beta-nicotinamide D-ribonucleotide + AMP + 2 H(+). It catalyses the reaction NADPH + H2O = reduced beta-nicotinamide D-ribonucleotide + adenosine 2',5'-bisphosphate + 2 H(+). MRNA decapping enzyme that specifically removes the nicotinamide adenine dinucleotide (NAD) cap from a subset of mRNAs by hydrolyzing the diphosphate linkage to produce nicotinamide mononucleotide (NMN) and 5' monophosphate mRNA. The NAD-cap is present at the 5'-end of some RNAs; in contrast to the canonical N7 methylguanosine (m7G) cap, the NAD cap promotes mRNA decay. Preferentially acts on NAD-capped transcripts in response to nutrient stress. Also acts on free nicotinamide adenine dinucleotide molecules: hydrolyzes NAD(H) into NMN(H) and AMP, and NADPH into NMNH and 2',5'-ADP. May act to regulate the concentration of peroxisomal nicotinamide nucleotide cofactors required for oxidative metabolism in this organelle. Regulates the levels of circadian clock components PER1, PER2, PER3 and CRY2 in the liver. The sequence is that of NAD-capped RNA hydrolase NUDT12 from Macaca fascicularis (Crab-eating macaque).